The primary structure comprises 130 residues: Small ribosomal subunit protein uS9 (130 aa).

The tract at residues 105–130 (TRDSRMKERKKPGLRGARRAPQFSKR) is disordered. Over residues 111–130 (KERKKPGLRGARRAPQFSKR) the composition is skewed to basic residues.

Belongs to the universal ribosomal protein uS9 family.

In Lysinibacillus sphaericus (strain C3-41), this protein is Small ribosomal subunit protein uS9.